The primary structure comprises 228 residues: 2-C-methyl-D-erythritol 4-phosphate cytidylyltransferase (228 aa).

The protein belongs to the IspD/TarI cytidylyltransferase family. IspD subfamily.

The catalysed reaction is 2-C-methyl-D-erythritol 4-phosphate + CTP + H(+) = 4-CDP-2-C-methyl-D-erythritol + diphosphate. It participates in isoprenoid biosynthesis; isopentenyl diphosphate biosynthesis via DXP pathway; isopentenyl diphosphate from 1-deoxy-D-xylulose 5-phosphate: step 2/6. In terms of biological role, catalyzes the formation of 4-diphosphocytidyl-2-C-methyl-D-erythritol from CTP and 2-C-methyl-D-erythritol 4-phosphate (MEP). This chain is 2-C-methyl-D-erythritol 4-phosphate cytidylyltransferase, found in Dechloromonas aromatica (strain RCB).